Consider the following 142-residue polypeptide: MPPKPAEKKPSSTAGKAPASSAGKAPAEAAKKTSKAPAKSGEKKKATKVRKETYSTYIYRVLKQVHPDTGISNKAMAILNSFVQDIFERIATEASKLASYNKKSTISSREIQTAVRLILPGELSKHAISEGTKSVTKFSSSK.

Residues 1–10 (MPPKPAEKKP) are compositionally biased toward basic and acidic residues. The interval 1–50 (MPPKPAEKKPSSTAGKAPASSAGKAPAEAAKKTSKAPAKSGEKKKATKVR) is disordered. N6-acetyllysine; alternate occurs at positions 8 and 9. Residues lysine 8 and lysine 9 each participate in a glycyl lysine isopeptide (Lys-Gly) (interchain with G-Cter in SUMO); alternate cross-link. Over residues 11-28 (SSTAGKAPASSAGKAPAE) the composition is skewed to low complexity. At lysine 24 the chain carries N6-acetyllysine. The segment covering 40–50 (SGEKKKATKVR) has biased composition (basic and acidic residues). Lysine 137 participates in a covalent cross-link: Glycyl lysine isopeptide (Lys-Gly) (interchain with G-Cter in ubiquitin).

The protein belongs to the histone H2B family. The nucleosome is a histone octamer containing two molecules each of H2A, H2B, H3 and H4 assembled in one H3-H4 heterotetramer and two H2A-H2B heterodimers. The octamer wraps approximately 147 bp of DNA. Post-translationally, monoubiquitinated by the UBC2-BRE1 complex to form H2BK123ub1. H2BK123ub1 gives a specific tag for epigenetic transcriptional activation and is also prerequisite for H3K4me and H3K79me formation. H2BK123ub1 also modulates the formation of double-strand breaks during meiosis and is a prerequisite for DNA-damage checkpoint activation. In terms of processing, acetylation of N-terminal lysines and particularly formation of H2BK11ac has a positive effect on transcription. Sumoylation to form H2BK6su or H2BK7su occurs preferentially near the telomeres and represses gene transcription.

Its subcellular location is the nucleus. It localises to the chromosome. In terms of biological role, core component of nucleosome. Nucleosomes wrap and compact DNA into chromatin, limiting DNA accessibility to the cellular machineries which require DNA as a template. Histones thereby play a central role in transcription regulation, DNA repair, DNA replication and chromosomal stability. DNA accessibility is regulated via a complex set of post-translational modifications of histones, also called histone code, and nucleosome remodeling. This is Histone H2B (HTB1) from Mycosarcoma maydis (Corn smut fungus).